Reading from the N-terminus, the 514-residue chain is HTH-type transcriptional regulatory protein TyrR (514 aa).

The ACT domain occupies 2-72; it reads RLEVFCEDRL…GVTDVRTVPW (71 aa). Residues 78–120 form the PAS domain; it reads EHLALSALLEALPEPVLSLDMKSKIEMANPASCQLFAHTQDRM. The Sigma-54 factor interaction domain maps to 206-428; that stretch reads IIAVSAKMKH…VKNAIYRALT (223 aa). Residues 234–241 and 290–299 each bind ATP; these read GNTGTGKD and ANGGSVLLDE. Positions 482–502 form a DNA-binding region, H-T-H motif; the sequence is STRKLAKRLGVSHTAIANKLR.

As to quaternary structure, homodimer. In presence of tyrosine (or high concentrations of phenylalanine or tryptophan) and ATP, it self-associates to form an hexamer.

It localises to the cytoplasm. Dual transcriptional regulator of the TyrR regulon, which includes a number of genes coding for proteins involved in the biosynthesis or transport of the three aromatic amino acids, phenylalanine, tyrosine and tryptophan. These three aromatic amino acids act as effectors which bind to the TyrR protein to form an active regulatory protein. Acts by binding specifically to TyrR boxes in the promoter region of the target genes. The chain is HTH-type transcriptional regulatory protein TyrR from Citrobacter braakii.